The primary structure comprises 853 residues: DNA mismatch repair protein MutS (853 aa).

614-621 (GPNMGGKS) contacts ATP.

This sequence belongs to the DNA mismatch repair MutS family.

Functionally, this protein is involved in the repair of mismatches in DNA. It is possible that it carries out the mismatch recognition step. This protein has a weak ATPase activity. In Escherichia coli (strain SE11), this protein is DNA mismatch repair protein MutS.